We begin with the raw amino-acid sequence, 223 residues long: Peptidyl-tRNA hydrolase (223 aa).

Y16 contacts tRNA. H21 (proton acceptor) is an active-site residue. Positions 67, 69, and 113 each coordinate tRNA.

This sequence belongs to the PTH family. In terms of assembly, monomer.

The protein resides in the cytoplasm. The catalysed reaction is an N-acyl-L-alpha-aminoacyl-tRNA + H2O = an N-acyl-L-amino acid + a tRNA + H(+). Functionally, hydrolyzes ribosome-free peptidyl-tRNAs (with 1 or more amino acids incorporated), which drop off the ribosome during protein synthesis, or as a result of ribosome stalling. Catalyzes the release of premature peptidyl moieties from peptidyl-tRNA molecules trapped in stalled 50S ribosomal subunits, and thus maintains levels of free tRNAs and 50S ribosomes. This Helicobacter hepaticus (strain ATCC 51449 / 3B1) protein is Peptidyl-tRNA hydrolase.